The primary structure comprises 196 residues: MESHKPSTNKDDLIFNIIPRKIKQLPESDRNLLEYGSAYIGLNAAFGGLIANSLFRRILNVTQARVASSLPMAVIPFLTANLSYHSFVSLPLSTGNLNCEICTTTRGTLVGFVLGGLYPILLAIPVNGGLAARYESSPLPQRGNIFNYWITISKPVFRKMLFPTLLQTAFAAYLGSRQYKLLIKALQLPEPDLEIQ.

At 1 to 34 (MESHKPSTNKDDLIFNIIPRKIKQLPESDRNLLE) the chain is on the mitochondrial matrix side. The chain crosses the membrane as a helical span at residues 35–55 (YGSAYIGLNAAFGGLIANSLF). Residues 56 to 57 (RR) are Mitochondrial intermembrane-facing. A helical membrane pass occupies residues 58–78 (ILNVTQARVASSLPMAVIPFL). Over 79 to 106 (TANLSYHSFVSLPLSTGNLNCEICTTTR) the chain is Mitochondrial matrix. The helical transmembrane segment at 107–127 (GTLVGFVLGGLYPILLAIPVN) threads the bilayer. Topologically, residues 128 to 159 (GGLAARYESSPLPQRGNIFNYWITISKPVFRK) are mitochondrial intermembrane. The chain crosses the membrane as a helical span at residues 160 to 176 (MLFPTLLQTAFAAYLGS). Residues 177 to 196 (RQYKLLIKALQLPEPDLEIQ) are Mitochondrial matrix-facing.

Belongs to the TMEM126 family. In terms of assembly, interacts with OXA1L; promoting cotranslational quality control in mitochondria.

It is found in the mitochondrion inner membrane. Protein required for the cotranslational protein quality control in the inner membrane of the mitochondria. Associates with newly synthesized polypeptides and may act as a chaperone that cooperates with OXA1L for the insertion of newly synthesized mitochondrial proteins into the inner membrane. Required for the assembly of the ND4 module of mitochondrial complex I. The chain is Transmembrane protein 126A (Tmem126a) from Rattus norvegicus (Rat).